The chain runs to 569 residues: Acyl-CoA transferase FVEG_12629 (569 aa).

It belongs to the CoA-transferase III family.

Its function is as follows. Acyl-CoA transferase; part of the Fusarium detoxification of benzoxazolinone cluster 2 (FDB2) involved in the degradation of benzoxazolinones produced by the host plant. Maize, wheat, and rye produce the 2 benzoxazinone phytoanticipins 2,4-dihy-droxy-7-methoxy-1,4-benzoxazin-3-one (DIMBOA) and 2,4-dihydroxy-1,4-benzoxazin-3-one (DIBOA) that, due to their inherent instability once released, spontaneously degrade to the more stable corresponding benzoxazolinones, 6-methoxy-2-benzoxazolinone (MBOA) and 2-benzoxazolinone (BOA), respectively. The first step in the detoxification of benzoxazolinones involves the hydrolysis of the cyclic ester bond of benzoxazolinones by the FDB1 cluster gamma-lactamase MBL1 to aminophenols. MBL1 is able to convert BOA into 2-aminophenol (2-AP), as well as MBOA into 5-methoxy-2-aminophenol (2-AMP). The FDB2 cluster N-malonyltransferase FDB2/NAT1 then metabolizes aminophenols via N-malonylation to non-toxic malonamic acids. FDB2/NAT1 converts 2-AP into N-(2-hydroxyphenyl) malonamic acid (HPMA) and 2-AMP into N-(2-hydroxy-4-methoxyphenyl) malonamic acid (HMPMA). The duplicated dienlactone hydrolases DLH1 and DLH2 may provide redundant function for hydrolyzing the lactone moiety in the BOA molecule. The roles of the amidases an other enzymes encoded by the 2 FDB clusters have not been identified so far. The protein is Acyl-CoA transferase FVEG_12629 of Gibberella moniliformis (strain M3125 / FGSC 7600) (Maize ear and stalk rot fungus).